A 504-amino-acid polypeptide reads, in one-letter code: PE-PGRS family protein PE_PGRS62 (504 aa).

Residues 4–94 (VVTVPEAVAA…AAYLNTESAN (91 aa)) form the PE domain.

The protein belongs to the mycobacterial PE family. PGRS subfamily. Interacts with host Toll-like receptor 2 (TLR2).

The protein resides in the secreted. The protein localises to the cell wall. Its function is as follows. Supports mycobacterial virulence via inhibition of phagosome maturation and host inducible nitric oxide synthase (iNOS) expression. May promote the survival within macrophages by disturbing the cytokines profiles and blocking the endoplasmic reticulum (ER) stress-mediated apoptosis. May also affect bacterial cell wall composition. Functionally, expression in Mycobacterium smegmatis, a nonpathogenic species naturally deficient in PE_PGRS genes, results in enhanced resistance to various in vitro stresses. It also leads to phagosome maturation arrest and increased survival in macrophages. The sequence is that of PE-PGRS family protein PE_PGRS62 from Mycobacterium tuberculosis (strain ATCC 25618 / H37Rv).